Reading from the N-terminus, the 234-residue chain is Phosphoribosylformylglycinamidine synthase subunit PurQ (234 aa).

Positions 6 to 234 (VGVVVFPGSN…ESLFRSLTGV (229 aa)) constitute a Glutamine amidotransferase type-1 domain. Catalysis depends on C89, which acts as the Nucleophile. Residues H206 and E208 contribute to the active site.

Part of the FGAM synthase complex composed of 1 PurL, 1 PurQ and 2 PurS subunits.

It localises to the cytoplasm. The enzyme catalyses N(2)-formyl-N(1)-(5-phospho-beta-D-ribosyl)glycinamide + L-glutamine + ATP + H2O = 2-formamido-N(1)-(5-O-phospho-beta-D-ribosyl)acetamidine + L-glutamate + ADP + phosphate + H(+). The catalysed reaction is L-glutamine + H2O = L-glutamate + NH4(+). The protein operates within purine metabolism; IMP biosynthesis via de novo pathway; 5-amino-1-(5-phospho-D-ribosyl)imidazole from N(2)-formyl-N(1)-(5-phospho-D-ribosyl)glycinamide: step 1/2. Part of the phosphoribosylformylglycinamidine synthase complex involved in the purines biosynthetic pathway. Catalyzes the ATP-dependent conversion of formylglycinamide ribonucleotide (FGAR) and glutamine to yield formylglycinamidine ribonucleotide (FGAM) and glutamate. The FGAM synthase complex is composed of three subunits. PurQ produces an ammonia molecule by converting glutamine to glutamate. PurL transfers the ammonia molecule to FGAR to form FGAM in an ATP-dependent manner. PurS interacts with PurQ and PurL and is thought to assist in the transfer of the ammonia molecule from PurQ to PurL. The chain is Phosphoribosylformylglycinamidine synthase subunit PurQ from Chlorobium chlorochromatii (strain CaD3).